Reading from the N-terminus, the 79-residue chain is MEVFEEVRDVVVEQLSVAPDAVKIDSKIIEDLGADSLDVVELVMALEEKFGIEIPDSEAEKLISIKDVVTYIENLNKNK.

Residues 1 to 76 (MEVFEEVRDV…DVVTYIENLN (76 aa)) form the Carrier domain. An O-(pantetheine 4'-phosphoryl)serine modification is found at Ser-36.

Belongs to the acyl carrier protein (ACP) family. Post-translationally, 4'-phosphopantetheine is transferred from CoA to a specific serine of apo-ACP by AcpS. This modification is essential for activity because fatty acids are bound in thioester linkage to the sulfhydryl of the prosthetic group.

The protein localises to the cytoplasm. Its pathway is lipid metabolism; fatty acid biosynthesis. Carrier of the growing fatty acid chain in fatty acid biosynthesis. In Campylobacter hominis (strain ATCC BAA-381 / DSM 21671 / CCUG 45161 / LMG 19568 / NCTC 13146 / CH001A), this protein is Acyl carrier protein.